The following is a 57-amino-acid chain: Metallothionein-2 (57 aa).

Residues 1-28 (PDPCCNDKCDCKEGECKTGCKCTSCRCP) are beta. 18 residues coordinate a divalent metal cation: C4, C5, C9, C11, C16, C20, C22, C25, C27, C30, C33, C37, C39, C45, C49, C53, C55, and C56. The alpha stretch occupies residues 29–57 (PCEQCSSGCKCANKEDCRKTCSKPCSCCP).

Belongs to the metallothionein superfamily. Type 3 family.

In terms of biological role, metallothioneins have a high content of cysteine residues that bind various heavy metals. Class I MTS in marine crustacea are involved in the sequestration of elevated levels of heavy-metal ions. The protein is Metallothionein-2 of Scylla serrata (Mud crab).